We begin with the raw amino-acid sequence, 100 residues long: Cystatin-B (100 aa).

In terms of domain architecture, Cystatin spans Gly-6–Gln-88. The Secondary area of contact motif lies at Gln-48–Gly-52.

The protein belongs to the cystatin family. Widely expressed. Highly expressed in liver and to a lesser extent in spleen, gill, brain, intestine, kidney, head kidney and blood. Lowest level in muscle.

It localises to the cytoplasm. Functionally, thiol protease inhibitor. Has papain inhibitory activity in vitro. May be involved in immune responses against invading Gram-negative bacteria. The sequence is that of Cystatin-B from Oplegnathus fasciatus (Barred knifejaw).